The primary structure comprises 614 residues: MAHSGNGESFHDPLRGFIQRNCFRWNNQKLILQCFMALAFVGITSSTTQPDIEGGALLQLRDSLNDSSNRLKWTRDFVSPCYSWSYVTCRGQSVVALNLASSGFTGTLSPAITKLKFLVTLELQNNSLSGALPDSLGNMVNLQTLNLSVNSFSGSIPASWSQLSNLKHLDLSSNNLTGSIPTQFFSIPTFDFSGTQLICGKSLNQPCSSSSRLPVTSSKKKLRDITLTASCVASIILFLGAMVMYHHHRVRRTKYDIFFDVAGEDDRKISFGQLKRFSLREIQLATDSFNESNLIGQGGFGKVYRGLLPDKTKVAVKRLADYFSPGGEAAFQREIQLISVAVHKNLLRLIGFCTTSSERILVYPYMENLSVAYRLRDLKAGEEGLDWPTRKRVAFGSAHGLEYLHEHCNPKIIHRDLKAANILLDNNFEPVLGDFGLAKLVDTSLTHVTTQVRGTMGHIAPEYLCTGKSSEKTDVFGYGITLLELVTGQRAIDFSRLEEEENILLLDHIKKLLREQRLRDIVDSNLTTYDSKEVETIVQVALLCTQGSPEDRPAMSEVVKMLQGTGGLAEKWTEWEQLEEVRNKEALLLPTLPATWDEEETTVDQESIRLSTAR.

A signal peptide spans 1 to 50 (MAHSGNGESFHDPLRGFIQRNCFRWNNQKLILQCFMALAFVGITSSTTQP). Residues 51-224 (DIEGGALLQL…VTSSKKKLRD (174 aa)) are Extracellular-facing. Residues Asn-65, Asn-125, Asn-146, and Asn-175 are each glycosylated (N-linked (GlcNAc...) asparagine). LRR repeat units follow at residues 115–139 (LKFLVTLELQNNSLSGALPDSLGNM), 141–163 (NLQTLNLSVNSFSGSIPASWSQL), and 164–187 (SNLKHLDLSSNNLTGSIPTQFFSI). A helical transmembrane segment spans residues 225–245 (ITLTASCVASIILFLGAMVMY). At 246–613 (HHHRVRRTKY…DQESIRLSTA (368 aa)) the chain is on the cytoplasmic side. Thr-286 carries the phosphothreonine modification. The region spanning 289-573 (FNESNLIGQG…GTGGLAEKWT (285 aa)) is the Protein kinase domain. 295–303 (IGQGGFGKV) provides a ligand contact to ATP. Thr-312 is modified (phosphothreonine). Lys-317 contacts ATP. Position 370 is a phosphoserine (Ser-370). Thr-389 is subject to Phosphothreonine. The active-site Proton acceptor is the Asp-416. Residues Thr-449, Thr-450, and Thr-455 each carry the phosphothreonine modification. At Tyr-463 the chain carries Phosphotyrosine. At Thr-466 the chain carries Phosphothreonine. Residue Ser-470 is modified to Phosphoserine. Thr-545 carries the post-translational modification Phosphothreonine.

The protein belongs to the protein kinase superfamily. Ser/Thr protein kinase family.

It localises to the cell membrane. It carries out the reaction L-seryl-[protein] + ATP = O-phospho-L-seryl-[protein] + ADP + H(+). The catalysed reaction is L-threonyl-[protein] + ATP = O-phospho-L-threonyl-[protein] + ADP + H(+). The polypeptide is Probable LRR receptor-like serine/threonine-protein kinase At5g63710 (Arabidopsis thaliana (Mouse-ear cress)).